Consider the following 443-residue polypeptide: Transcriptional regulatory protein ZraR (443 aa).

Residues 7–121 form the Response regulatory domain; the sequence is DILVVDDDIS…KLQLTLSEAL (115 aa). Aspartate 56 carries the post-translational modification 4-aspartylphosphate. Residues 141–370 form the Sigma-54 factor interaction domain; the sequence is MVGDSPAMRA…LENAVERAVV (230 aa). Glycine 172, threonine 173, arginine 329, and arginine 359 together coordinate ATP. The H-T-H motif DNA-binding region spans 423–442; the sequence is KTEAARRLGITRKTLLAKLS.

Post-translationally, phosphorylated by ZraS.

The protein localises to the cytoplasm. Activity of the ZraS/ZraR two-component system is repressed by the zinc-bound form of ZraP, which probably interacts with the periplasmic region of ZraS. Part of the Zra signaling pathway, an envelope stress response (ESR) system composed of the periplasmic accessory protein ZraP, the histidine kinase ZraS and the transcriptional regulator ZraR. The ZraPSR system contributes to antibiotic resistance and is important for membrane integrity in the presence of membrane-targeting biocides. ZraR is a member of the two-component regulatory system ZraS/ZraR. When activated by ZraS, acts in conjunction with sigma-54 to regulate the expression of zraP in the presence of high Zn(2+) or Pb(2+) concentrations. Also positively autoregulates the expression of the zraSR operon. This chain is Transcriptional regulatory protein ZraR (zraR), found in Klebsiella oxytoca.